Here is a 1429-residue protein sequence, read N- to C-terminus: Dicer-like protein 2 (1429 aa).

The 180-residue stretch at 21–200 folds into the Helicase ATP-binding domain; sequence MFEASLKGNI…TIEMNLNSVC (180 aa). 34-41 is a binding site for ATP; sequence MGTGSGKT. The DEAH box motif lies at 141–144; the sequence is DEAH. Residues 335–501 enclose the Helicase C-terminal domain; the sequence is ALISFLMSTE…EDRRRTEELR (167 aa). Positions 528–622 constitute a Dicer dsRNA-binding fold domain; sequence AMQHLVHFCD…LPLTKSREFT (95 aa). RNase III domains are found at residues 874 to 1014 and 1056 to 1250; these read ATRL…IDGG and QENL…VDSG. The Mg(2+) site is built by Glu1095, Asp1236, and Glu1239.

This sequence belongs to the helicase family. Dicer subfamily. It depends on Mg(2+) as a cofactor. Mn(2+) is required as a cofactor.

In terms of biological role, dicer-like endonuclease involved in cleaving double-stranded RNA in the RNA interference (RNAi) pathway. Produces 21 to 25 bp dsRNAs (siRNAs) which target the selective destruction of homologous RNAs leading to sequence-specific suppression of gene expression, called post-transcriptional gene silencing (PTGS). Part of a broad host defense response against viral infection and transposons. The polypeptide is Dicer-like protein 2 (dcl2) (Emericella nidulans (strain FGSC A4 / ATCC 38163 / CBS 112.46 / NRRL 194 / M139) (Aspergillus nidulans)).